The sequence spans 58 residues: Rho-conotoxin TIA (58 aa).

The N-terminal stretch at 1-16 (MFTVFLLVVLATTGVS) is a signal peptide. The propeptide occupies 17-38 (FTLDRASDGGNAVAKKSDVTAR). Residues 40-42 (NWR) form an interaction with ADRA1B region. Intrachain disulfides connect Cys-43–Cys-49 and Cys-44–Cys-57. The interval 45–47 (LIP) is lacks the Ser-Xaa-Pro motif that is crucial for potent interaction with nAChR. Cys-57 carries the cysteine amide modification.

The protein belongs to the conotoxin A superfamily. In terms of tissue distribution, expressed by the venom duct.

Its subcellular location is the secreted. Allosteric inhibitor of alpha-1B adrenergic receptors (ADRA1B). Binds to an allosteric modulatory site on transmembrane helix 6 and 7 at the base of extracellular loop 3 of ADRA1B. Also weakly inhibits alpha-1A (ADRA1A) and alpha-1D (ADRA1D) adrenergic receptors in a competitive manner. Potently inhibits contractions of vas deferens, spleen and aorta in response to noradrenaline. May also inhibits nicotinic acetylcholine receptors with a possible distinct nAChR binding mode from other alpha-conotoxins, due to a different three residue motif (lacks the Ser-Xaa-Pro motif). The protein is Rho-conotoxin TIA of Conus tulipa (Fish-hunting cone snail).